A 298-amino-acid polypeptide reads, in one-letter code: NAD kinase (298 aa).

Residue Asp-80 is the Proton acceptor of the active site. NAD(+)-binding positions include 80–81, 154–155, Arg-182, Asp-184, 195–200, Ala-219, and Gln-253; these read DG, ND, and TAYALS.

Belongs to the NAD kinase family. The cofactor is a divalent metal cation.

It localises to the cytoplasm. It catalyses the reaction NAD(+) + ATP = ADP + NADP(+) + H(+). Functionally, involved in the regulation of the intracellular balance of NAD and NADP, and is a key enzyme in the biosynthesis of NADP. Catalyzes specifically the phosphorylation on 2'-hydroxyl of the adenosine moiety of NAD to yield NADP. This Paracidovorax citrulli (strain AAC00-1) (Acidovorax citrulli) protein is NAD kinase.